Here is a 352-residue protein sequence, read N- to C-terminus: Phosphoribosylformylglycinamidine cyclo-ligase (352 aa).

The protein belongs to the AIR synthase family.

The protein resides in the cytoplasm. The enzyme catalyses 2-formamido-N(1)-(5-O-phospho-beta-D-ribosyl)acetamidine + ATP = 5-amino-1-(5-phospho-beta-D-ribosyl)imidazole + ADP + phosphate + H(+). The protein operates within purine metabolism; IMP biosynthesis via de novo pathway; 5-amino-1-(5-phospho-D-ribosyl)imidazole from N(2)-formyl-N(1)-(5-phospho-D-ribosyl)glycinamide: step 2/2. The polypeptide is Phosphoribosylformylglycinamidine cyclo-ligase (Azoarcus sp. (strain BH72)).